The primary structure comprises 322 residues: Protease HtpX homolog (322 aa).

2 helical membrane passes run 19–39 and 61–81; these read ILLI…CYLL and FINL…IAYF. Residue H165 coordinates Zn(2+). E166 is a catalytic residue. H169 contacts Zn(2+). The next 2 membrane-spanning stretches (helical) occupy residues 175 to 195 and 216 to 236; these read VRLL…AQIA and ILIL…ATLM. E245 serves as a coordination point for Zn(2+).

Belongs to the peptidase M48B family. Zn(2+) serves as cofactor.

It localises to the cell inner membrane. This chain is Protease HtpX homolog, found in Bacteroides fragilis (strain YCH46).